A 203-amino-acid chain; its full sequence is Cytochrome c biogenesis ATP-binding export protein CcmA (203 aa).

Residues 2–203 (LEALDLAGVR…KTSQTVRMGA (202 aa)) enclose the ABC transporter domain. 34–41 (GENGSGKT) serves as a coordination point for ATP.

This sequence belongs to the ABC transporter superfamily. CcmA exporter (TC 3.A.1.107) family. In terms of assembly, the complex is composed of two ATP-binding proteins (CcmA) and two transmembrane proteins (CcmB).

It is found in the cell inner membrane. It catalyses the reaction heme b(in) + ATP + H2O = heme b(out) + ADP + phosphate + H(+). Its function is as follows. Part of the ABC transporter complex CcmAB involved in the biogenesis of c-type cytochromes; once thought to export heme, this seems not to be the case, but its exact role is uncertain. Responsible for energy coupling to the transport system. This chain is Cytochrome c biogenesis ATP-binding export protein CcmA, found in Pseudomonas aeruginosa.